A 2472-amino-acid chain; its full sequence is Centrosomal protein of 290 kDa (2472 aa).

A self-association (with itself or C-terminus) region spans residues 1–689 (MPPNIKWKEL…MESKNAEGIF (689 aa)). Coiled-coil stretches lie at residues 59–747 (MKMK…LRQS), 1129–1392 (RQRI…QQSK), and 1459–1492 (QVILKTQATCKSLEEKLKEKESALRLAEQNILSR). A disordered region spans residues 128 to 164 (DRELEDMEKELDKEKKVNEQLALRNEEAENENSKLRR). The segment covering 137-164 (ELDKEKKVNEQLALRNEEAENENSKLRR) has biased composition (basic and acidic residues). The segment at 690 to 890 (DASLHLKAQV…TVLQVNEKSL (201 aa)) is interaction with IQCB1. Disordered stretches follow at residues 1691–1713 (AHKDSQSLKSELQAQKEANSRAP) and 2451–2472 (PSPLAASEHSEDGESPHSFPIY). Polar residues predominate over residues 1697-1713 (SLKSELQAQKEANSRAP). Residues 1960 to 2472 (TTGMTVDQVL…GESPHSFPIY (513 aa)) form a self-association (with itself or N-terminus) region.

In terms of assembly, part of the tectonic-like complex (also named B9 complex). Interacts with ATF4 via its N-terminal region. Associates with the BBSome complex, interacting (via N-terminus) with BBS4. Interacts with IQCB1/NPHP5; IQCB1 and CEP290/NPHP6 are proposed to form a functional NPHP5-6 module localized to the centrosome. Interacts with NPHP4; the interaction likely requires additional interactors. Interacts with ZNF423, FAM161A, CEP162, CEP162, CEP131, TALPID3, CCDC13, CC2D2A, RPGRIP1. Can self-associate (homo- or heteromeric). Interacts with CCP110; required for suppressing cilia formation. Interacts with RPGR. Associates (via C-terminus) with microtubules; association to microtubule is reduced in response to cellular stress, such as ultraviolet light (UV) radiation or heat shock, in a process that requires p38 MAP kinase signaling. Interacts with FAM161A. Interacts with PCM1. Interacts with CCDC66. Interacts with ARMC9 and CSPP1. In terms of processing, ubiquitinated. May undergo monoubiquitination; monoubiquitination is inhibited in response to cellular stress, such as ultraviolet light (UV) radiation or heat shock, but does not cause its displacement from centriolar satellites. Expressed in multiple organs during early postnatal development, with highest levels in hindbrain.

The protein resides in the cytoplasm. The protein localises to the cytoskeleton. It is found in the microtubule organizing center. It localises to the centrosome. Its subcellular location is the centriolar satellite. The protein resides in the nucleus. The protein localises to the centriole. It is found in the cell projection. It localises to the cilium. Its subcellular location is the cilium basal body. The protein resides in the cytoplasmic vesicle. In terms of biological role, involved in early and late steps in cilia formation. Its association with CCP110 is required for inhibition of primary cilia formation by CCP110. May play a role in early ciliogenesis in the disappearance of centriolar satellites and in the transition of primary ciliar vesicles (PCVs) to capped ciliary vesicles (CCVs). Required for the centrosomal recruitment of RAB8A and for the targeting of centriole satellite proteins to centrosomes such as of PCM1. Required for the correct localization of ciliary and phototransduction proteins in retinal photoreceptor cells; may play a role in ciliary transport processes. Required for efficient recruitment of RAB8A to primary cilium. In the ciliary transition zone is part of the tectonic-like complex (also named B9 complex) which is required for tissue-specific ciliogenesis and may regulate ciliary membrane composition. Involved in regulation of the BBSome complex integrity, specifically for presence of BBS2, BBS5 and BBS8/TTC8 in the complex, and in ciliary targeting of selected BBSome cargos. May play a role in controlling entry of the BBSome complex to cilia possibly implicating IQCB1/NPHP5. Activates ATF4-mediated transcription. This is Centrosomal protein of 290 kDa from Mus musculus (Mouse).